A 65-amino-acid chain; its full sequence is Conotoxin Cal1.5 (65 aa).

Residues 1-18 form the signal peptide; that stretch reads MRCLPVFIILLLLASTAA. Positions 19–49 are excised as a propeptide; sequence VDVAGSKLKRRLERKPYQGSQAYVKKTAFGL. 2 disulfide bridges follow: Cys52–Cys62 and Cys53–Cys59. Pro61 carries the post-translational modification 4-hydroxyproline.

The protein belongs to the conotoxin T superfamily. In terms of tissue distribution, expressed by the venom duct.

It is found in the secreted. Functionally, probable neurotoxin with unknown target. Possibly targets ion channels. The polypeptide is Conotoxin Cal1.5 (Californiconus californicus (California cone)).